The sequence spans 343 residues: Mating-type protein MAT-2 (343 aa).

Disordered regions lie at residues 98 to 117 (RSPQVVSSPQSAQTSPSEQT) and 177 to 223 (KKPW…AAMT). A compositionally biased stretch (low complexity) spans 99 to 117 (SPQVVSSPQSAQTSPSEQT). A DNA-binding region (HMG box) is located at residues 131-199 (APRPMNCWII…EHLRQHPNYK (69 aa)). Basic residues predominate over residues 206-218 (GEKKKRQSRKSKR).

The protein resides in the nucleus. This chain is Mating-type protein MAT-2 (MAT2), found in Cochliobolus heterostrophus (Southern corn leaf blight fungus).